A 233-amino-acid chain; its full sequence is Large ribosomal subunit protein uL1 (233 aa).

The protein belongs to the universal ribosomal protein uL1 family. In terms of assembly, part of the 50S ribosomal subunit.

Functionally, binds directly to 23S rRNA. The L1 stalk is quite mobile in the ribosome, and is involved in E site tRNA release. In terms of biological role, protein L1 is also a translational repressor protein, it controls the translation of the L11 operon by binding to its mRNA. This Pseudoalteromonas atlantica (strain T6c / ATCC BAA-1087) protein is Large ribosomal subunit protein uL1.